The following is a 699-amino-acid chain: 1,4-alpha-glucan-branching enzyme (699 aa).

Substrate is bound by residues 59–60 (NE) and 88–90 (WAP). Trp-104 is a (1,4-alpha-D-glucosyl)n binding site. Substrate is bound at residue 115–118 (DYGK). Residue Lys-140 participates in (1,4-alpha-D-glucosyl)n binding. The residue at position 170 (Tyr-170) is a Phosphotyrosine. Residue 330–333 (EVLR) coordinates substrate. Asp-354 (nucleophile) is an active-site residue. The Proton donor role is filled by Glu-409.

This sequence belongs to the glycosyl hydrolase 13 family. GlgB subfamily. Monomer.

The enzyme catalyses Transfers a segment of a (1-&gt;4)-alpha-D-glucan chain to a primary hydroxy group in a similar glucan chain.. Its pathway is glycan biosynthesis; glycogen biosynthesis. In terms of biological role, glycogen-branching enzyme participates in the glycogen biosynthetic process along with glycogenin and glycogen synthase. Generates alpha-1,6-glucosidic branches from alpha-1,4-linked glucose chains, to increase solubility of the glycogen polymer. This is 1,4-alpha-glucan-branching enzyme (GBE1) from Equus caballus (Horse).